The chain runs to 334 residues: Holliday junction branch migration complex subunit RuvB (334 aa).

A large ATPase domain (RuvB-L) region spans residues alanine 4–tyrosine 184. ATP contacts are provided by residues arginine 24, glycine 65, lysine 68, threonine 69, threonine 70, glutamate 131–tyrosine 133, arginine 174, tyrosine 184, and arginine 221. Threonine 69 contributes to the Mg(2+) binding site. The interval asparagine 185–aspartate 255 is small ATPAse domain (RuvB-S). Positions serine 258–glutamate 334 are head domain (RuvB-H). The DNA site is built by arginine 294, arginine 313, and arginine 318.

This sequence belongs to the RuvB family. In terms of assembly, homohexamer. Forms an RuvA(8)-RuvB(12)-Holliday junction (HJ) complex. HJ DNA is sandwiched between 2 RuvA tetramers; dsDNA enters through RuvA and exits via RuvB. An RuvB hexamer assembles on each DNA strand where it exits the tetramer. Each RuvB hexamer is contacted by two RuvA subunits (via domain III) on 2 adjacent RuvB subunits; this complex drives branch migration. In the full resolvosome a probable DNA-RuvA(4)-RuvB(12)-RuvC(2) complex forms which resolves the HJ.

It localises to the cytoplasm. It carries out the reaction ATP + H2O = ADP + phosphate + H(+). Functionally, the RuvA-RuvB-RuvC complex processes Holliday junction (HJ) DNA during genetic recombination and DNA repair, while the RuvA-RuvB complex plays an important role in the rescue of blocked DNA replication forks via replication fork reversal (RFR). RuvA specifically binds to HJ cruciform DNA, conferring on it an open structure. The RuvB hexamer acts as an ATP-dependent pump, pulling dsDNA into and through the RuvAB complex. RuvB forms 2 homohexamers on either side of HJ DNA bound by 1 or 2 RuvA tetramers; 4 subunits per hexamer contact DNA at a time. Coordinated motions by a converter formed by DNA-disengaged RuvB subunits stimulates ATP hydrolysis and nucleotide exchange. Immobilization of the converter enables RuvB to convert the ATP-contained energy into a lever motion, pulling 2 nucleotides of DNA out of the RuvA tetramer per ATP hydrolyzed, thus driving DNA branch migration. The RuvB motors rotate together with the DNA substrate, which together with the progressing nucleotide cycle form the mechanistic basis for DNA recombination by continuous HJ branch migration. Branch migration allows RuvC to scan DNA until it finds its consensus sequence, where it cleaves and resolves cruciform DNA. The sequence is that of Holliday junction branch migration complex subunit RuvB from Shewanella baltica (strain OS223).